Consider the following 671-residue polypeptide: Fusexin 1 (671 aa).

Over 1–12 the chain is Cytoplasmic; it reads MRAVSDFLKNKW. The helical transmembrane segment at 13–33 threads the bilayer; it reads VAVPAVALLILSLGFLAQNYI. The Extracellular portion of the chain corresponds to 34-574; that stretch reads TGSFVSGDQI…DPFCADGPLE (541 aa). Disulfide bonds link Cys145-Cys180, Cys409-Cys452, Cys480-Cys500, and Cys513-Cys528. Positions 168 to 173 are fusion loop; the sequence is GAIADY. Residues 575–595 form a helical membrane-spanning segment; that stretch reads MLSKMFHLVAGTAVAFFTGSL. Over 596 to 628 the chain is Cytoplasmic; it reads GYRAGRWVDGEYQIKGGFDPLKSRSVSRAKRGR. Residues 629-649 traverse the membrane as a helical segment; that stretch reads FLIGLIAELVSFLLGFYVILL. Val650 is a topological domain (extracellular). Residues 651 to 671 traverse the membrane as a helical segment; sequence PIWAQLMVILGYVLFKYYTPF.

It belongs to the HAP2/GCS1 family. Fusexin 1 subfamily. As to quaternary structure, homotrimer stabilized by interdomain contacts and numerous Ca(2+) and Na(+) ions.

It localises to the cell surface. Its subcellular location is the cell membrane. Functionally, exhibits fusogenic activity. Mediates cell-cell fusion in mammalian cells (bilateral fusion). In Natrinema altunense (strain JCM 12890 / CGMCC 1.3731 / AJ2), this protein is Fusexin 1.